We begin with the raw amino-acid sequence, 336 residues long: Glucokinase (336 aa).

12 to 17 (ADIGGT) is an ATP binding site.

This sequence belongs to the bacterial glucokinase family.

Its subcellular location is the cytoplasm. The enzyme catalyses D-glucose + ATP = D-glucose 6-phosphate + ADP + H(+). The chain is Glucokinase from Helicobacter pylori (strain J99 / ATCC 700824) (Campylobacter pylori J99).